We begin with the raw amino-acid sequence, 326 residues long: 4-hydroxythreonine-4-phosphate dehydrogenase (326 aa).

Positions 130 and 131 each coordinate substrate. 3 residues coordinate a divalent metal cation: H160, H205, and H260. Substrate-binding residues include K268, N277, and R286.

The protein belongs to the PdxA family. In terms of assembly, homodimer. Requires Zn(2+) as cofactor. The cofactor is Mg(2+). It depends on Co(2+) as a cofactor.

Its subcellular location is the cytoplasm. It catalyses the reaction 4-(phosphooxy)-L-threonine + NAD(+) = 3-amino-2-oxopropyl phosphate + CO2 + NADH. Its pathway is cofactor biosynthesis; pyridoxine 5'-phosphate biosynthesis; pyridoxine 5'-phosphate from D-erythrose 4-phosphate: step 4/5. Catalyzes the NAD(P)-dependent oxidation of 4-(phosphooxy)-L-threonine (HTP) into 2-amino-3-oxo-4-(phosphooxy)butyric acid which spontaneously decarboxylates to form 3-amino-2-oxopropyl phosphate (AHAP). This Aromatoleum aromaticum (strain DSM 19018 / LMG 30748 / EbN1) (Azoarcus sp. (strain EbN1)) protein is 4-hydroxythreonine-4-phosphate dehydrogenase.